Here is a 724-residue protein sequence, read N- to C-terminus: Ribosomal RNA large subunit methyltransferase K/L (724 aa).

Residues 42-153 (DAQRLVLWSR…KGRATLSVDL (112 aa)) form the THUMP domain.

This sequence belongs to the methyltransferase superfamily. RlmKL family.

The protein localises to the cytoplasm. The enzyme catalyses guanosine(2445) in 23S rRNA + S-adenosyl-L-methionine = N(2)-methylguanosine(2445) in 23S rRNA + S-adenosyl-L-homocysteine + H(+). It catalyses the reaction guanosine(2069) in 23S rRNA + S-adenosyl-L-methionine = N(2)-methylguanosine(2069) in 23S rRNA + S-adenosyl-L-homocysteine + H(+). Functionally, specifically methylates the guanine in position 2445 (m2G2445) and the guanine in position 2069 (m7G2069) of 23S rRNA. This is Ribosomal RNA large subunit methyltransferase K/L from Xylella fastidiosa (strain M23).